The following is a 254-amino-acid chain: Coiled-coil domain-containing protein 152 (254 aa).

Positions 61–246 (SIKEECATLH…LEQRLSVGKD (186 aa)) form a coiled coil.

In terms of tissue distribution, detected in stomach.

The protein is Coiled-coil domain-containing protein 152 (CCDC152) of Homo sapiens (Human).